The sequence spans 233 residues: Small ribosomal subunit protein uS3 (233 aa).

Positions 39–107 (VRQYLTKELA…PAQINIAEVR (69 aa)) constitute a KH type-2 domain.

It belongs to the universal ribosomal protein uS3 family. In terms of assembly, part of the 30S ribosomal subunit. Forms a tight complex with proteins S10 and S14.

In terms of biological role, binds the lower part of the 30S subunit head. Binds mRNA in the 70S ribosome, positioning it for translation. This Citrobacter koseri (strain ATCC BAA-895 / CDC 4225-83 / SGSC4696) protein is Small ribosomal subunit protein uS3.